The chain runs to 208 residues: Small ribosomal subunit protein uS4 (208 aa).

An S4 RNA-binding domain is found at 95-155; that stretch reads TRLDALVLRA…AKSQTMVPFQ (61 aa).

The protein belongs to the universal ribosomal protein uS4 family. Part of the 30S ribosomal subunit. Contacts protein S5. The interaction surface between S4 and S5 is involved in control of translational fidelity.

Its function is as follows. One of the primary rRNA binding proteins, it binds directly to 16S rRNA where it nucleates assembly of the body of the 30S subunit. With S5 and S12 plays an important role in translational accuracy. In Bifidobacterium adolescentis (strain ATCC 15703 / DSM 20083 / NCTC 11814 / E194a), this protein is Small ribosomal subunit protein uS4.